Here is a 176-residue protein sequence, read N- to C-terminus: NAD(P)H-quinone oxidoreductase subunit 6, chloroplastic (176 aa).

Helical transmembrane passes span 10 to 30 (FLLV…VLLP), 32 to 52 (PIFS…LYIL), 61 to 81 (AQLL…VMFM), 92 to 112 (LWTV…FSLM), and 152 to 172 (FFLP…GAIS).

It belongs to the complex I subunit 6 family. NDH is composed of at least 16 different subunits, 5 of which are encoded in the nucleus.

The protein resides in the plastid. Its subcellular location is the chloroplast thylakoid membrane. It carries out the reaction a plastoquinone + NADH + (n+1) H(+)(in) = a plastoquinol + NAD(+) + n H(+)(out). The enzyme catalyses a plastoquinone + NADPH + (n+1) H(+)(in) = a plastoquinol + NADP(+) + n H(+)(out). NDH shuttles electrons from NAD(P)H:plastoquinone, via FMN and iron-sulfur (Fe-S) centers, to quinones in the photosynthetic chain and possibly in a chloroplast respiratory chain. The immediate electron acceptor for the enzyme in this species is believed to be plastoquinone. Couples the redox reaction to proton translocation, and thus conserves the redox energy in a proton gradient. The protein is NAD(P)H-quinone oxidoreductase subunit 6, chloroplastic (ndhG) of Nasturtium officinale (Watercress).